The following is a 335-amino-acid chain: 4-hydroxy-3-methylbut-2-enyl diphosphate reductase (335 aa).

Cys-14 is a binding site for [4Fe-4S] cluster. (2E)-4-hydroxy-3-methylbut-2-enyl diphosphate-binding residues include His-43 and His-81. Residues His-43 and His-81 each contribute to the dimethylallyl diphosphate site. The isopentenyl diphosphate site is built by His-43 and His-81. Residue Cys-103 participates in [4Fe-4S] cluster binding. His-132 contacts (2E)-4-hydroxy-3-methylbut-2-enyl diphosphate. A dimethylallyl diphosphate-binding site is contributed by His-132. His-132 is a binding site for isopentenyl diphosphate. Glu-134 functions as the Proton donor in the catalytic mechanism. (2E)-4-hydroxy-3-methylbut-2-enyl diphosphate is bound at residue Thr-179. Position 209 (Cys-209) interacts with [4Fe-4S] cluster. 4 residues coordinate (2E)-4-hydroxy-3-methylbut-2-enyl diphosphate: Ser-237, Ser-238, Asn-239, and Ser-285. 4 residues coordinate dimethylallyl diphosphate: Ser-237, Ser-238, Asn-239, and Ser-285. Residues Ser-237, Ser-238, Asn-239, and Ser-285 each coordinate isopentenyl diphosphate.

Belongs to the IspH family. It depends on [4Fe-4S] cluster as a cofactor.

It catalyses the reaction isopentenyl diphosphate + 2 oxidized [2Fe-2S]-[ferredoxin] + H2O = (2E)-4-hydroxy-3-methylbut-2-enyl diphosphate + 2 reduced [2Fe-2S]-[ferredoxin] + 2 H(+). The catalysed reaction is dimethylallyl diphosphate + 2 oxidized [2Fe-2S]-[ferredoxin] + H2O = (2E)-4-hydroxy-3-methylbut-2-enyl diphosphate + 2 reduced [2Fe-2S]-[ferredoxin] + 2 H(+). It functions in the pathway isoprenoid biosynthesis; dimethylallyl diphosphate biosynthesis; dimethylallyl diphosphate from (2E)-4-hydroxy-3-methylbutenyl diphosphate: step 1/1. Its pathway is isoprenoid biosynthesis; isopentenyl diphosphate biosynthesis via DXP pathway; isopentenyl diphosphate from 1-deoxy-D-xylulose 5-phosphate: step 6/6. Catalyzes the conversion of 1-hydroxy-2-methyl-2-(E)-butenyl 4-diphosphate (HMBPP) into a mixture of isopentenyl diphosphate (IPP) and dimethylallyl diphosphate (DMAPP). Acts in the terminal step of the DOXP/MEP pathway for isoprenoid precursor biosynthesis. In Deinococcus radiodurans (strain ATCC 13939 / DSM 20539 / JCM 16871 / CCUG 27074 / LMG 4051 / NBRC 15346 / NCIMB 9279 / VKM B-1422 / R1), this protein is 4-hydroxy-3-methylbut-2-enyl diphosphate reductase.